We begin with the raw amino-acid sequence, 331 residues long: 6-phosphogluconolactonase (331 aa).

At lysine 287 the chain carries N6-acetyllysine.

The protein belongs to the cycloisomerase 2 family.

The enzyme catalyses 6-phospho-D-glucono-1,5-lactone + H2O = 6-phospho-D-gluconate + H(+). The protein operates within carbohydrate degradation; pentose phosphate pathway; D-ribulose 5-phosphate from D-glucose 6-phosphate (oxidative stage): step 2/3. Catalyzes the hydrolysis of 6-phosphogluconolactone to 6-phosphogluconate. The protein is 6-phosphogluconolactonase of Escherichia coli O7:K1 (strain IAI39 / ExPEC).